A 1026-amino-acid chain; its full sequence is Beta-galactosidase (1026 aa).

Positions 104 and 203 each coordinate substrate. D203 provides a ligand contact to Na(+). Residues E418, H420, and E463 each contribute to the Mg(2+) site. Residues E463 and 539–542 (EYAH) each bind substrate. Residue E463 is the Proton donor of the active site. The active-site Nucleophile is the E539. Position 599 (N599) interacts with Mg(2+). Residues F603 and N606 each coordinate Na(+). The substrate site is built by N606 and W1002.

Belongs to the glycosyl hydrolase 2 family. As to quaternary structure, homotetramer. The cofactor is Mg(2+). Na(+) is required as a cofactor.

It catalyses the reaction Hydrolysis of terminal non-reducing beta-D-galactose residues in beta-D-galactosides.. In Erwinia tasmaniensis (strain DSM 17950 / CFBP 7177 / CIP 109463 / NCPPB 4357 / Et1/99), this protein is Beta-galactosidase.